The primary structure comprises 359 residues: Caffeic acid 3-O-methyltransferase (359 aa).

126 to 132 (MNQDKVL) is a binding site for substrate. The tract at residues 158–176 (AFEYHGTDPRFNKVFNRGM) is substrate binding. Gly204, Asp227, Asp247, Met248, and Lys261 together coordinate S-adenosyl-L-methionine. Catalysis depends on His265, which acts as the Proton acceptor.

Belongs to the class I-like SAM-binding methyltransferase superfamily. Cation-independent O-methyltransferase family. COMT subfamily. Homodimer. In terms of tissue distribution, fruit. Not expressed in leaf.

The catalysed reaction is (E)-caffeate + S-adenosyl-L-methionine = (E)-ferulate + S-adenosyl-L-homocysteine + H(+). It functions in the pathway aromatic compound metabolism; phenylpropanoid biosynthesis. Catalyzes the conversion of caffeic acid to ferulic acid and of 5-hydroxyferulic acid to sinapic acid. The resulting products may subsequently be converted to the corresponding alcohols that are incorporated into lignins. In Capsicum annuum (Capsicum pepper), this protein is Caffeic acid 3-O-methyltransferase (COMT).